We begin with the raw amino-acid sequence, 100 residues long: Large ribosomal subunit protein uL23 (100 aa).

It belongs to the universal ribosomal protein uL23 family. As to quaternary structure, part of the 50S ribosomal subunit. Contacts protein L29, and trigger factor when it is bound to the ribosome.

In terms of biological role, one of the early assembly proteins it binds 23S rRNA. One of the proteins that surrounds the polypeptide exit tunnel on the outside of the ribosome. Forms the main docking site for trigger factor binding to the ribosome. This is Large ribosomal subunit protein uL23 from Pasteurella multocida (strain Pm70).